Consider the following 120-residue polypeptide: NAD(P)H-quinone oxidoreductase subunit 3, chloroplastic (120 aa).

The next 3 helical transmembrane spans lie at I9–G29, M64–M84, and V88–S108.

This sequence belongs to the complex I subunit 3 family. NDH is composed of at least 16 different subunits, 5 of which are encoded in the nucleus.

The protein localises to the plastid. The protein resides in the chloroplast thylakoid membrane. It catalyses the reaction a plastoquinone + NADH + (n+1) H(+)(in) = a plastoquinol + NAD(+) + n H(+)(out). The catalysed reaction is a plastoquinone + NADPH + (n+1) H(+)(in) = a plastoquinol + NADP(+) + n H(+)(out). NDH shuttles electrons from NAD(P)H:plastoquinone, via FMN and iron-sulfur (Fe-S) centers, to quinones in the photosynthetic chain and possibly in a chloroplast respiratory chain. The immediate electron acceptor for the enzyme in this species is believed to be plastoquinone. Couples the redox reaction to proton translocation, and thus conserves the redox energy in a proton gradient. The protein is NAD(P)H-quinone oxidoreductase subunit 3, chloroplastic of Drimys granadensis.